The sequence spans 101 residues: Urease subunit beta (101 aa).

Belongs to the urease beta subunit family. Heterotrimer of UreA (gamma), UreB (beta) and UreC (alpha) subunits. Three heterotrimers associate to form the active enzyme.

It is found in the cytoplasm. The catalysed reaction is urea + 2 H2O + H(+) = hydrogencarbonate + 2 NH4(+). Its pathway is nitrogen metabolism; urea degradation; CO(2) and NH(3) from urea (urease route): step 1/1. The chain is Urease subunit beta from Burkholderia vietnamiensis (strain G4 / LMG 22486) (Burkholderia cepacia (strain R1808)).